The primary structure comprises 130 residues: Fluoride-specific ion channel FluC (130 aa).

The next 4 membrane-spanning stretches (helical) occupy residues 7–27 (VLAICIGASLGALARWRLGLW), 36–56 (LGTLAANLIGGYLIGICVAVF), 69–89 (ALITGFLGGLTTFSSFSAEVV), and 99–119 (LGFGTAGLHLFGSLLLTLAGI). Positions 76 and 79 each coordinate Na(+).

It belongs to the fluoride channel Fluc/FEX (TC 1.A.43) family.

Its subcellular location is the cell inner membrane. It carries out the reaction fluoride(in) = fluoride(out). With respect to regulation, na(+) is not transported, but it plays an essential structural role and its presence is essential for fluoride channel function. Fluoride-specific ion channel. Important for reducing fluoride concentration in the cell, thus reducing its toxicity. The polypeptide is Fluoride-specific ion channel FluC (Albidiferax ferrireducens (strain ATCC BAA-621 / DSM 15236 / T118) (Rhodoferax ferrireducens)).